The chain runs to 64 residues: Large ribosomal subunit protein bL35 (64 aa).

Positions 1 to 22 (MPKMKSHTGMGKRVRVTGKGKI) are enriched in basic residues. A disordered region spans residues 1 to 39 (MPKMKSHTGMGKRVRVTGKGKIVKQQAGLRHNLEKKPST).

Belongs to the bacterial ribosomal protein bL35 family.

This Salinispora arenicola (strain CNS-205) protein is Large ribosomal subunit protein bL35.